The sequence spans 267 residues: Large ribosomal subunit protein uL4 (267 aa).

It belongs to the universal ribosomal protein uL4 family. In terms of assembly, part of the 50S ribosomal subunit.

In terms of biological role, one of the primary rRNA binding proteins, this protein initially binds near the 5'-end of the 23S rRNA. It is important during the early stages of 50S assembly. It makes multiple contacts with different domains of the 23S rRNA in the assembled 50S subunit and ribosome. Forms part of the polypeptide exit tunnel. The protein is Large ribosomal subunit protein uL4 of Saccharolobus islandicus (strain L.S.2.15 / Lassen #1) (Sulfolobus islandicus).